Here is a 359-residue protein sequence, read N- to C-terminus: MKRVIAGAFAVWLVGWAGGFGTAIAASEPAYPWAPGPPPSPSPVGDASTAKVVYALGGARMPGIPWYEYTNQAGSQYFPNAKHDLIDYPAGAAFSWWPTMLLPPGSHQDNMTVGVAVKDGTNSLDNAIHHGTDPAAAVGLSQGSLVLDQEQARLANDPTAPAPDKLQFTTFGDPTGRHAFGASFLARIFPPGSHIPIPFIEYTMPQQVDSQYDTNHVVTAYDGFSDFPDRPDNLLAVANAAIGAAIAHTPIGFTGPGDVPPQNIRTTVNSRGATTTTYLVPVNHLPLTLPLRYLGMSDAEVDQIDSVLQPQIDAAYARNDNWFTRPVSVDPVRGLDPLTAPGSIVEGARGLLGSPAFGG.

A helical membrane pass occupies residues 4–24 (VIAGAFAVWLVGWAGGFGTAI). Residues 79 to 316 (PNAKHDLIDY…VLQPQIDAAY (238 aa)) form the PE-PPE domain.

Belongs to the mycobacterial PPE family.

Its subcellular location is the cell inner membrane. With respect to regulation, activity is probably potentiated by the DAT/PAT transporter MmpL10. Inhibited by the lipase inhibitor tetrahydrolipstatin (THL). Functionally, involved in the final steps of polyacyltrehalose (PAT) biosynthesis. Catalyzes the transfer of three mycolipenoyl groups onto diacyltrehalose (DAT) to form PAT. The chain is Diacyltrehalose acyltransferase Chp2 from Mycobacterium tuberculosis (strain ATCC 25618 / H37Rv).